A 139-amino-acid polypeptide reads, in one-letter code: MRHGNSGRKLNRTASHRKAMFANMAIALIKHEQIVTTLPKAKELRPYVEKLITLGKRGDLHARRQAYAALPDKVWAAKLFDVLGPRYQERQGGYIRVLKAGFRHGDSAPMAVIEFVDRDESAKGQDSGPVHVEGDEEAA.

Residues 120 to 139 (ESAKGQDSGPVHVEGDEEAA) form a disordered region.

Belongs to the bacterial ribosomal protein bL17 family. Part of the 50S ribosomal subunit. Contacts protein L32.

This Parvibaculum lavamentivorans (strain DS-1 / DSM 13023 / NCIMB 13966) protein is Large ribosomal subunit protein bL17.